The following is a 155-amino-acid chain: Small ribosomal subunit protein uS7 (155 aa).

The protein belongs to the universal ribosomal protein uS7 family. As to quaternary structure, part of the 30S ribosomal subunit. Contacts proteins S9 and S11.

In terms of biological role, one of the primary rRNA binding proteins, it binds directly to 16S rRNA where it nucleates assembly of the head domain of the 30S subunit. Is located at the subunit interface close to the decoding center, probably blocks exit of the E-site tRNA. This is Small ribosomal subunit protein uS7 from Thermosipho melanesiensis (strain DSM 12029 / CIP 104789 / BI429).